The sequence spans 179 residues: Large ribosomal subunit protein uL5 (179 aa).

This sequence belongs to the universal ribosomal protein uL5 family. Part of the 50S ribosomal subunit; part of the 5S rRNA/L5/L18/L25 subcomplex. Contacts the 5S rRNA and the P site tRNA. Forms a bridge to the 30S subunit in the 70S ribosome.

This is one of the proteins that bind and probably mediate the attachment of the 5S RNA into the large ribosomal subunit, where it forms part of the central protuberance. In the 70S ribosome it contacts protein S13 of the 30S subunit (bridge B1b), connecting the 2 subunits; this bridge is implicated in subunit movement. Contacts the P site tRNA; the 5S rRNA and some of its associated proteins might help stabilize positioning of ribosome-bound tRNAs. The chain is Large ribosomal subunit protein uL5 from Burkholderia cenocepacia (strain HI2424).